The sequence spans 383 residues: Sulfate adenylyltransferase (383 aa).

It belongs to the sulfate adenylyltransferase family.

The catalysed reaction is sulfate + ATP + H(+) = adenosine 5'-phosphosulfate + diphosphate. It participates in sulfur metabolism; hydrogen sulfide biosynthesis; sulfite from sulfate: step 1/3. This is Sulfate adenylyltransferase from Halothermothrix orenii (strain H 168 / OCM 544 / DSM 9562).